A 329-amino-acid polypeptide reads, in one-letter code: Protein STRICTOSIDINE SYNTHASE-LIKE 11 (329 aa).

The first 23 residues, 1–23 (MMRSFVSLISLLLLLSFSSSVLS), serve as a signal peptide directing secretion. N-linked (GlcNAc...) asparagine glycosylation is found at Asn37 and Asn79.

This sequence belongs to the strictosidine synthase family.

It is found in the vacuole. The enzyme catalyses 3alpha(S)-strictosidine + H2O = secologanin + tryptamine. The protein operates within alkaloid biosynthesis; 3alpha(S)-strictosidine biosynthesis; 3alpha(S)-strictosidine from secologanin and tryptamine: step 1/1. In terms of biological role, catalyzes the stereospecific condensation of tryptamine with secologanin to form strictosidine, the key intermediate of indole alkaloid biosynthesis. This chain is Protein STRICTOSIDINE SYNTHASE-LIKE 11, found in Arabidopsis thaliana (Mouse-ear cress).